The sequence spans 196 residues: Large ribosomal subunit protein bL20 (196 aa).

It belongs to the bacterial ribosomal protein bL20 family.

In terms of biological role, binds directly to 23S ribosomal RNA and is necessary for the in vitro assembly process of the 50S ribosomal subunit. It is not involved in the protein synthesizing functions of that subunit. The protein is Large ribosomal subunit protein bL20 (rplT) of Oenococcus oeni (strain ATCC BAA-331 / PSU-1).